The primary structure comprises 446 residues: Tubulin beta-8 chain (446 aa).

Residues glutamine 11, glutamate 69, serine 138, glycine 142, threonine 143, glycine 144, asparagine 204, and asparagine 226 each contribute to the GTP site. Glutamate 69 contacts Mg(2+). Residues 426–446 (QDATAEDDYDEDDDAAAADEA) form a disordered region. A compositionally biased stretch (acidic residues) spans 429–446 (TAEDDYDEDDDAAAADEA).

It belongs to the tubulin family. As to quaternary structure, dimer of alpha and beta chains. A typical microtubule is a hollow water-filled tube with an outer diameter of 25 nm and an inner diameter of 15 nM. Alpha-beta heterodimers associate head-to-tail to form protofilaments running lengthwise along the microtubule wall with the beta-tubulin subunit facing the microtubule plus end conferring a structural polarity. Microtubules usually have 13 protofilaments but different protofilament numbers can be found in some organisms and specialized cells. The cofactor is Mg(2+). Expressed in anthers.

It localises to the cytoplasm. It is found in the cytoskeleton. Functionally, tubulin is the major constituent of microtubules, a cylinder consisting of laterally associated linear protofilaments composed of alpha- and beta-tubulin heterodimers. Microtubules grow by the addition of GTP-tubulin dimers to the microtubule end, where a stabilizing cap forms. Below the cap, tubulin dimers are in GDP-bound state, owing to GTPase activity of alpha-tubulin. This is Tubulin beta-8 chain (TUBB8) from Oryza sativa subsp. japonica (Rice).